A 179-amino-acid chain; its full sequence is Large ribosomal subunit protein uL5 (179 aa).

Belongs to the universal ribosomal protein uL5 family. Part of the 50S ribosomal subunit; part of the 5S rRNA/L5/L18/L25 subcomplex. Contacts the 5S rRNA and the P site tRNA. Forms a bridge to the 30S subunit in the 70S ribosome.

Its function is as follows. This is one of the proteins that bind and probably mediate the attachment of the 5S RNA into the large ribosomal subunit, where it forms part of the central protuberance. In the 70S ribosome it contacts protein S13 of the 30S subunit (bridge B1b), connecting the 2 subunits; this bridge is implicated in subunit movement. Contacts the P site tRNA; the 5S rRNA and some of its associated proteins might help stabilize positioning of ribosome-bound tRNAs. The protein is Large ribosomal subunit protein uL5 of Serratia proteamaculans (strain 568).